Reading from the N-terminus, the 362-residue chain is Phosphate acyltransferase (362 aa).

The disordered stretch occupies residues 343 to 362 (TKKISTSTINPKTSETTKES). The segment covering 344–356 (KKISTSTINPKTS) has biased composition (polar residues).

It belongs to the PlsX family. Homodimer. Probably interacts with PlsY.

It localises to the cytoplasm. It catalyses the reaction a fatty acyl-[ACP] + phosphate = an acyl phosphate + holo-[ACP]. It functions in the pathway lipid metabolism; phospholipid metabolism. Functionally, catalyzes the reversible formation of acyl-phosphate (acyl-PO(4)) from acyl-[acyl-carrier-protein] (acyl-ACP). This enzyme utilizes acyl-ACP as fatty acyl donor, but not acyl-CoA. The protein is Phosphate acyltransferase of Aster yellows witches'-broom phytoplasma (strain AYWB).